The chain runs to 38 residues: Turripeptide GpIAa (38 aa).

The protein belongs to the turripeptide family. As to expression, expressed by the venom duct.

It localises to the secreted. In Cryptogemma periscelida (Atlantic gem-turris), this protein is Turripeptide GpIAa.